Here is a 503-residue protein sequence, read N- to C-terminus: MKEYQVYLERARSRQQDFLYPLLFREYIYGLAYSHNLNRSIFLENVGYDNKYSLLIVKRLITRMYQQNHLIISANDSTKNPFWGYNKNLDSQIISEGFAIVVEIPFLRQLSSSLEEAEILQSYQNWRSIHSIFPFLEDKLTYLNYVSDIRIPYPIHLEILVQILRYWVKDAPFFHLLRLFLYNFSNWNSFLTTKKSISTFSKRNPRLFLFLHNFYVCEYEYIFVFLRTKSSHLRLKSFSVFFERIFFDAKREHLVKVFSKDFSYTLTFFKDPNIHYVRYQGKCILASKNVPFLMNKWKHYFIHLWQCFFDVWPQPRMININPLSEHSFQLLGYFLNVRLNRSVVRSQMLQNTFLIEIGIKKLDIIVPILPLIRSLAKAKFXBILGEPISKPVWADSSDFDIIDRFLRICRNLSHYYNGSSKKKSLYRIKYILRLSCIKTLACKHKSTVRAFLKRSGSEELLQEFFTEEXXILSLIFPXBSSTLQRNRIWYLDILFSNDLVHDE.

Belongs to the intron maturase 2 family. MatK subfamily.

It localises to the plastid. Its subcellular location is the chloroplast. Usually encoded in the trnK tRNA gene intron. Probably assists in splicing its own and other chloroplast group II introns. The protein is Maturase K of Lathyrus vestitus (Pacific pea).